The chain runs to 248 residues: tRNA (guanine-N(1)-)-methyltransferase (248 aa).

S-adenosyl-L-methionine contacts are provided by residues G126 and 150 to 155; that span reads LGDYVL. The segment at 224 to 248 is disordered; sequence WRRTQQEERTRERRPDLWAAFDSED. Positions 227–239 are enriched in basic and acidic residues; sequence TQQEERTRERRPD.

Belongs to the RNA methyltransferase TrmD family. As to quaternary structure, homodimer.

The protein localises to the cytoplasm. The catalysed reaction is guanosine(37) in tRNA + S-adenosyl-L-methionine = N(1)-methylguanosine(37) in tRNA + S-adenosyl-L-homocysteine + H(+). In terms of biological role, specifically methylates guanosine-37 in various tRNAs. The sequence is that of tRNA (guanine-N(1)-)-methyltransferase from Micrococcus luteus (strain ATCC 4698 / DSM 20030 / JCM 1464 / CCM 169 / CCUG 5858 / IAM 1056 / NBRC 3333 / NCIMB 9278 / NCTC 2665 / VKM Ac-2230) (Micrococcus lysodeikticus).